The sequence spans 72 residues: uncharacterized protein (72 aa).

A helical membrane pass occupies residues 33–53; it reads VCIFFSLIFFFFFFFFCVNWG.

The protein resides in the membrane. This is an uncharacterized protein from Dictyostelium discoideum (Social amoeba).